Here is a 931-residue protein sequence, read N- to C-terminus: Bifunctional glutamine synthetase adenylyltransferase/adenylyl-removing enzyme (931 aa).

The interval 1-434 (MTLAPADLPV…STEFAALLAP (434 aa)) is adenylyl removase. Residues 441–931 (PDALANYWRS…ACRAAELPFA (491 aa)) are adenylyl transferase.

The protein belongs to the GlnE family. Requires Mg(2+) as cofactor.

It carries out the reaction [glutamine synthetase]-O(4)-(5'-adenylyl)-L-tyrosine + phosphate = [glutamine synthetase]-L-tyrosine + ADP. It catalyses the reaction [glutamine synthetase]-L-tyrosine + ATP = [glutamine synthetase]-O(4)-(5'-adenylyl)-L-tyrosine + diphosphate. Its function is as follows. Involved in the regulation of glutamine synthetase GlnA, a key enzyme in the process to assimilate ammonia. When cellular nitrogen levels are high, the C-terminal adenylyl transferase (AT) inactivates GlnA by covalent transfer of an adenylyl group from ATP to specific tyrosine residue of GlnA, thus reducing its activity. Conversely, when nitrogen levels are low, the N-terminal adenylyl removase (AR) activates GlnA by removing the adenylyl group by phosphorolysis, increasing its activity. The regulatory region of GlnE binds the signal transduction protein PII (GlnB) which indicates the nitrogen status of the cell. This chain is Bifunctional glutamine synthetase adenylyltransferase/adenylyl-removing enzyme, found in Stenotrophomonas maltophilia (strain K279a).